A 132-amino-acid chain; its full sequence is Small ribosomal subunit protein uS8 (132 aa).

It belongs to the universal ribosomal protein uS8 family. Part of the 30S ribosomal subunit. Contacts proteins S5 and S12.

One of the primary rRNA binding proteins, it binds directly to 16S rRNA central domain where it helps coordinate assembly of the platform of the 30S subunit. This Clostridium tetani (strain Massachusetts / E88) protein is Small ribosomal subunit protein uS8.